Consider the following 265-residue polypeptide: Large ribosomal subunit protein eL8 (265 aa).

It belongs to the eukaryotic ribosomal protein eL8 family. As to quaternary structure, interacts with cmd-1 in the presence of Ca(2+).

The sequence is that of Large ribosomal subunit protein eL8 from Caenorhabditis elegans.